We begin with the raw amino-acid sequence, 243 residues long: Vimentin A2 (243 aa).

Residues 1 to 22 (GFSLQDELDFLKKLHDEELADV) are coil 1B. Positions 1 to 188 (GFSLQDELDF…KLLEGEESRI (188 aa)) constitute an IF rod domain. Residues 23 to 45 (QAQIQDQQVQVDMDMAKPDLTAA) form a linker 12 region. Positions 46–184 (LRDVRLQYEN…ATYRKLLEGE (139 aa)) are coil 2. Positions 185 to 243 (ESRITTPLPNLSSFNLRDAILETKPILENTFSKKVLIKTIETRDGEVINESTQNHDDLE) are tail.

The protein belongs to the intermediate filament family. In terms of assembly, homomer. Post-translationally, one of the most prominent phosphoproteins in various cells of mesenchymal origin. Phosphorylation is enhanced during cell division, at which time vimentin filaments are significantly reorganized. In terms of tissue distribution, expressed in low amounts in retina, optic nerve, and brain and in higher amounts in spinal cord.

Functionally, vimentins are class-III intermediate filaments found in various non-epithelial cells, especially mesenchymal cells. Vimentin is attached to the nucleus, endoplasmic reticulum, and mitochondria, either laterally or terminally. The chain is Vimentin A2 from Carassius auratus (Goldfish).